The following is a 250-amino-acid chain: Menaquinol:cytochrome c reductase cytochrome c subunit (250 aa).

3 consecutive transmembrane segments (helical) span residues W46 to A62, V104 to L124, and V137 to V157. Residues D178–A250 enclose the Cytochrome c domain. C192, C195, and H196 together coordinate heme c. Residues M229–A250 are disordered.

Belongs to the cytochrome b family. In terms of assembly, the main subunits of the menaquinol:cytochrome c complex are a Rieske-type iron-sulfur protein (QcrA), a cytochrome b (QcrB) and a cytochrome c (QcrC). Requires heme c as cofactor.

Its subcellular location is the cell membrane. In terms of biological role, component of the menaquinol:cytochrome c reductase complex. The chain is Menaquinol:cytochrome c reductase cytochrome c subunit (qcrC) from Geobacillus thermodenitrificans.